Here is a 1342-residue protein sequence, read N- to C-terminus: DNA-directed RNA polymerase subunit beta (1342 aa).

The protein belongs to the RNA polymerase beta chain family. The RNAP catalytic core consists of 2 alpha, 1 beta, 1 beta' and 1 omega subunit. When a sigma factor is associated with the core the holoenzyme is formed, which can initiate transcription.

It catalyses the reaction RNA(n) + a ribonucleoside 5'-triphosphate = RNA(n+1) + diphosphate. DNA-dependent RNA polymerase catalyzes the transcription of DNA into RNA using the four ribonucleoside triphosphates as substrates. This chain is DNA-directed RNA polymerase subunit beta, found in Yersinia pseudotuberculosis serotype O:1b (strain IP 31758).